A 529-amino-acid polypeptide reads, in one-letter code: MPVMAPTASLLLSPRPLPASRRVPSLPALSASGRLRLRRARADTRLRVAAPPSVPGEADQAPGETEPSTSSADEKFVWRDHWYPVSLVEDLDPSVPTPFQLLNRDLVIWKDPKSGEWVALDDRCPHRLAPLSEGRIDETGCLQCSYHGWSFDGSGACTRIPQAAPEGPEAKAVRSPKACAIKFPTLVSQGLLFVWPDENGWEKATATKPPMLPKEFEDPAFSTVTIQRDLYYGYDTLMENVSDPSHIEFAHHKVTGRRDRARPLPFKMESSGAWGYSGSNSGNPRISATFVAPCYALNKIEIDTKLPIFGDQKWVIWICSFNIPMAPGKTRSIVCSARNFFQFSMPGKAWWQLVPRWYEHWTSNLVYDGDMIVLQGQEKIFLSASKESSADINQQYTKITFTPTQADRFVLAFRAWLRKFGNSQPDWFGNPSQEVLPSTVLSKREMLDRYEQHTLKCSSCKGAYNAFQTLQKVFMGATVAFCATAGIPADVQFRLLLAAAALVSAAVAYAFYTLQKNFVFVDYVHAEID.

Disordered stretches follow at residues 1 to 24 (MPVM…RRVP) and 46 to 72 (LRVA…TSSA). A chloroplast-targeting transit peptide spans 1-47 (MPVMAPTASLLLSPRPLPASRRVPSLPALSASGRLRLRRARADTRLR). Residues 82-194 (WYPVSLVEDL…TLVSQGLLFV (113 aa)) enclose the Rieske domain. [2Fe-2S] cluster is bound by residues cysteine 124, histidine 126, cysteine 144, and histidine 147.

[2Fe-2S] cluster serves as cofactor. As to expression, expressed in leaves. Expressed at low levels in roots, stems, panicles and seeds.

Its subcellular location is the plastid. It localises to the chloroplast. It carries out the reaction pheophorbide a + 2 reduced [2Fe-2S]-[ferredoxin] + O2 + 2 H(+) = red chlorophyll catabolite + 2 oxidized [2Fe-2S]-[ferredoxin]. It functions in the pathway porphyrin-containing compound metabolism; chlorophyll degradation. Its function is as follows. Catalyzes the key reaction of chlorophyll catabolism, porphyrin macrocycle cleavage of pheophorbide a (pheide a) to a primary fluorescent catabolite (pFCC). Works in a two-step reaction with red chlorophyll catabolite reductase (RCCR). Creates the intermediate RCC through the opening of the porphyrin macrocycle by the introduction of one atom of molecular oxygen at the alpha-methine bridge. Seems to be specific for pheide a. Belongs to the chlorophyll catabolic enzymes (CCEs). May play a role in senescence and response to wounding. This chain is Pheophorbide a oxygenase, chloroplastic, found in Oryza sativa subsp. japonica (Rice).